The following is a 185-amino-acid chain: Urease accessory protein UreE (185 aa).

The tract at residues 153-185 is disordered; the sequence is LRANSAQGHGHSHSHSHDHHGYHHHGDGNWHKH. Residues 162–175 show a composition bias toward basic residues; that stretch reads GHSHSHSHDHHGYH. The segment covering 176-185 has biased composition (basic and acidic residues); it reads HHGDGNWHKH.

It belongs to the UreE family.

The protein localises to the cytoplasm. Involved in urease metallocenter assembly. Binds nickel. Probably functions as a nickel donor during metallocenter assembly. In Haemophilus influenzae (strain PittGG), this protein is Urease accessory protein UreE.